Consider the following 609-residue polypeptide: Hemagglutinin/proteinase (609 aa).

Residues 1 to 24 form the signal peptide; the sequence is MKMIQRPLNWLVLAGAATGFPLYA. A propeptide spanning residues 25–196 is cleaved from the precursor; that stretch reads AQMVTIDDAS…LDQWDGINHA (172 aa). His-343 serves as a coordination point for Zn(2+). Residue Glu-344 is part of the active site. 2 residues coordinate Zn(2+): His-347 and Glu-367. Catalysis depends on His-426, which acts as the Proton donor.

Belongs to the peptidase M4 family. Zn(2+) serves as cofactor.

Its subcellular location is the secreted. Functionally, may play a role in the pathogenesis of cholera. Hap nicks and activates the A subunit of cholera enterotoxin and related enterotoxins. In Vibrio cholerae serotype O1 (strain ATCC 39315 / El Tor Inaba N16961), this protein is Hemagglutinin/proteinase (hap).